Reading from the N-terminus, the 113-residue chain is UPF0321 protein C569.02c (113 aa).

A signal peptide spans 1–17; sequence MLLLFCICCAFIKLVLA. Residues Asn-20, Asn-39, and Asn-65 are each glycosylated (N-linked (GlcNAc...) asparagine).

It belongs to the UPF0321 family.

The protein is UPF0321 protein C569.02c of Schizosaccharomyces pombe (strain 972 / ATCC 24843) (Fission yeast).